We begin with the raw amino-acid sequence, 354 residues long: Putative ankyrin repeat protein L284 (354 aa).

ANK repeat units follow at residues 201-230 (ILDD…LSND), 253-284 (SRYP…NPIV), and 286-314 (LHKA…DIDI).

The sequence is that of Putative ankyrin repeat protein L284 from Acanthamoeba polyphaga (Amoeba).